Here is a 200-residue protein sequence, read N- to C-terminus: Probable GTP-binding protein EngB (200 aa).

The region spanning 25–199 is the EngB-type G domain; that stretch reads SGYEVAFAGR…ISVLDRWYEW (175 aa). Residues 33–40, 60–64, 78–81, 145–148, and 178–180 each bind GTP; these read GRSNAGKS, GRTQL, DLPG, TKAD, and FSS. The Mg(2+) site is built by Ser-40 and Thr-62.

Belongs to the TRAFAC class TrmE-Era-EngA-EngB-Septin-like GTPase superfamily. EngB GTPase family. It depends on Mg(2+) as a cofactor.

In terms of biological role, necessary for normal cell division and for the maintenance of normal septation. The sequence is that of Probable GTP-binding protein EngB from Legionella pneumophila (strain Paris).